A 347-amino-acid polypeptide reads, in one-letter code: Ribosomal RNA large subunit methyltransferase M (347 aa).

Residues Ser184, 217–220, Asp236, Asp256, and Asp272 contribute to the S-adenosyl-L-methionine site; that span reads APGG. The active-site Proton acceptor is the Lys301.

It belongs to the class I-like SAM-binding methyltransferase superfamily. RNA methyltransferase RlmE family. RlmM subfamily. As to quaternary structure, monomer.

The protein resides in the cytoplasm. The enzyme catalyses cytidine(2498) in 23S rRNA + S-adenosyl-L-methionine = 2'-O-methylcytidine(2498) in 23S rRNA + S-adenosyl-L-homocysteine + H(+). In terms of biological role, catalyzes the 2'-O-methylation at nucleotide C2498 in 23S rRNA. The polypeptide is Ribosomal RNA large subunit methyltransferase M (Xanthomonas oryzae pv. oryzae (strain PXO99A)).